The sequence spans 51 residues: Insulin (51 aa).

Intrachain disulfides connect Cys-7-Cys-36, Cys-19-Cys-49, and Cys-35-Cys-40.

Belongs to the insulin family. Heterodimer of a B chain and an A chain linked by two disulfide bonds.

It is found in the secreted. In terms of biological role, insulin decreases blood glucose concentration. It increases cell permeability to monosaccharides, amino acids and fatty acids. It accelerates glycolysis, the pentose phosphate cycle, and glycogen synthesis in liver. The sequence is that of Insulin (INS) from Myocastor coypus (Coypu).